Here is a 603-residue protein sequence, read N- to C-terminus: MNHIRNFSIIAHIDHGKSTLADRLIQRCGGLQEREMEAQVLDSMDIEKERGITIKAQTASLKYKAQNGQIYNLNLIDTPGHVDFSYEVSRSLSACEGALLVVDASQGVEAQTVANCYTALDLGVEVVPVLNKMDLPNADPDNAKIEIEDVIGIDATDAIACSAKTGMGIDEILEAVVARMPPPRGNPAGALRAMIVDSWFDTYVGVVMLVRVVDGRLAKGERIKMMATGTTYNADSLGVFTPANEPRESLEAGEVGYIIAGIRELQAAKVGDTITLIKAGTGGAAFTATEPLPGFKEIQPQVFAGLYPTEASEYESLRDSLEKLKLNDSSLRYQPEVSQALGFGFRCGFLGLLHMEIVQERLEREFDQDLITTAPSVEYQVVQADGTVKMVENPSKMPDQGRLDEVREPIVTVHLYMPQDYVGAVMTLANQKRGVQMNMAYHGRQVMLTYEMPLAEIVMDFFDKLKSVSRGYASMDYEFKEYRAADVVKVDILLNGDKVDALSIIVHRSQSQYRGRAVVSKMREIISRQMYDVAIQAAIGSNVIARETIKAMRKNVIAKCYGGDISRKHKLLDKQKEGKKRMKQIGSVSVPQEAFLAILQVDA.

Residues 2–184 form the tr-type G domain; the sequence is NHIRNFSIIA…AVVARMPPPR (183 aa). GTP-binding positions include 14–19 and 131–134; these read DHGKST and NKMD.

This sequence belongs to the TRAFAC class translation factor GTPase superfamily. Classic translation factor GTPase family. LepA subfamily.

The protein localises to the cell inner membrane. The catalysed reaction is GTP + H2O = GDP + phosphate + H(+). Required for accurate and efficient protein synthesis under certain stress conditions. May act as a fidelity factor of the translation reaction, by catalyzing a one-codon backward translocation of tRNAs on improperly translocated ribosomes. Back-translocation proceeds from a post-translocation (POST) complex to a pre-translocation (PRE) complex, thus giving elongation factor G a second chance to translocate the tRNAs correctly. Binds to ribosomes in a GTP-dependent manner. The sequence is that of Elongation factor 4 from Albidiferax ferrireducens (strain ATCC BAA-621 / DSM 15236 / T118) (Rhodoferax ferrireducens).